We begin with the raw amino-acid sequence, 301 residues long: Bifunctional protein FolD (301 aa).

Residues 164–166 (GRS), serine 191, and isoleucine 232 contribute to the NADP(+) site.

It belongs to the tetrahydrofolate dehydrogenase/cyclohydrolase family. As to quaternary structure, homodimer.

The catalysed reaction is (6R)-5,10-methylene-5,6,7,8-tetrahydrofolate + NADP(+) = (6R)-5,10-methenyltetrahydrofolate + NADPH. It carries out the reaction (6R)-5,10-methenyltetrahydrofolate + H2O = (6R)-10-formyltetrahydrofolate + H(+). The protein operates within one-carbon metabolism; tetrahydrofolate interconversion. In terms of biological role, catalyzes the oxidation of 5,10-methylenetetrahydrofolate to 5,10-methenyltetrahydrofolate and then the hydrolysis of 5,10-methenyltetrahydrofolate to 10-formyltetrahydrofolate. In Borrelia garinii subsp. bavariensis (strain ATCC BAA-2496 / DSM 23469 / PBi) (Borreliella bavariensis), this protein is Bifunctional protein FolD.